The following is a 241-amino-acid chain: DnaA regulatory inactivator Hda (241 aa).

It belongs to the DnaA family. HdA subfamily. The active form seems to be an ADP-bound monomer. Forms the RIDA complex (regulatory inactivation of DnaA) of ATP-DnaA, ADP-Hda and the DNA-loaded beta sliding clamp (dnaN).

Its function is as follows. Mediates the interaction of DNA replication initiator protein DnaA with DNA polymerase subunit beta sliding clamp (dnaN). Stimulates hydrolysis of ATP-DnaA to ADP-DnaA, rendering DnaA inactive for reinitiation, a process called regulatory inhibition of DnaA or RIDA. The polypeptide is DnaA regulatory inactivator Hda (Salmonella arizonae (strain ATCC BAA-731 / CDC346-86 / RSK2980)).